Consider the following 142-residue polypeptide: Small ribosomal subunit protein bS6 (142 aa).

Over residues 110 to 133 (NKKPSHAKEKHEKTEHTHSHHTEE) the composition is skewed to basic and acidic residues. The tract at residues 110–142 (NKKPSHAKEKHEKTEHTHSHHTEEAESVGSHSE) is disordered.

The protein belongs to the bacterial ribosomal protein bS6 family.

Its function is as follows. Binds together with bS18 to 16S ribosomal RNA. This Helicobacter pylori (strain ATCC 700392 / 26695) (Campylobacter pylori) protein is Small ribosomal subunit protein bS6 (rpsF).